We begin with the raw amino-acid sequence, 308 residues long: Cilia- and flagella-associated protein 73 (308 aa).

Coiled coils occupy residues 103 to 134 and 164 to 227; these read RIQK…LEKN and LSAT…QEAK.

It belongs to the CFAP73 family. Interacts with FAP100; form the modifier of inner arm (MIA) complex.

The protein localises to the cytoplasm. Its subcellular location is the cytoskeleton. The protein resides in the flagellum axoneme. In terms of biological role, as part of MIA, a complex associated with the outer doublet microtubules of the axoneme, may play a role in ciliary/flagellar motility by regulating the assembly and the activity of inner dynein arm. This chain is Cilia- and flagella-associated protein 73, found in Chlamydomonas reinhardtii (Chlamydomonas smithii).